Consider the following 225-residue polypeptide: UPF0758 protein XCV4028 (225 aa).

The MPN domain maps to 102–224 (ALSDPPSVGR…PVSFAERGWL (123 aa)). The Zn(2+) site is built by histidine 173, histidine 175, and aspartate 186. The JAMM motif signature appears at 173 to 186 (HNHPSGNPEPSEAD).

Belongs to the UPF0758 family.

The polypeptide is UPF0758 protein XCV4028 (Xanthomonas euvesicatoria pv. vesicatoria (strain 85-10) (Xanthomonas campestris pv. vesicatoria)).